Reading from the N-terminus, the 612-residue chain is Threonine--tRNA ligase (612 aa).

The catalytic stretch occupies residues D218–P509. Positions 310, 361, and 486 each coordinate Zn(2+).

The protein belongs to the class-II aminoacyl-tRNA synthetase family. In terms of assembly, homodimer. The cofactor is Zn(2+).

Its subcellular location is the cytoplasm. The enzyme catalyses tRNA(Thr) + L-threonine + ATP = L-threonyl-tRNA(Thr) + AMP + diphosphate + H(+). Its function is as follows. Catalyzes the attachment of threonine to tRNA(Thr) in a two-step reaction: L-threonine is first activated by ATP to form Thr-AMP and then transferred to the acceptor end of tRNA(Thr). Also edits incorrectly charged L-seryl-tRNA(Thr). This chain is Threonine--tRNA ligase, found in Helicobacter pylori (strain G27).